The primary structure comprises 1000 residues: Lysine-specific histone demethylase 1 (1000 aa).

The tract at residues 104 to 123 is disordered; sequence RRPAGRRGRPALNTSNSLER. Positions 107-137 form a coiled coil; sequence AGRRGRPALNTSNSLERNGTRYVSAEAPISV. An SWIRM domain is found at 153 to 249; the sequence is CYESAIASNL…YGCIYIISSL (97 aa). Residues 260-302, Glu301, and 328-329 each bind FAD; these read VAII…IYEA and LA. The interval 279–950 is demethylase activity; that stretch reads LFAQYEQDFL…RCESQPIPED (672 aa). Residues 434–529 are a coiled coil; it reads IGWYISIEAF…ADMLNSLAST (96 aa). Residues 780 to 800 are disordered; it reads TYGTKRNAQQALGKEGERENK. The HMG box DNA-binding region spans 841 to 921; the sequence is SRPSANPYLL…NYSTRLEEYQ (81 aa). 908–909 contacts FAD; sequence AR. Over residues 959–972 the composition is skewed to basic and acidic residues; sequence EQEDEHLHPEKEGM. Positions 959 to 1000 are disordered; the sequence is EQEDEHLHPEKEGMSVENSDDDYHDDLDYEDSISEVFPDNFS. Residues 976 to 991 show a composition bias toward acidic residues; that stretch reads NSDDDYHDDLDYEDSI.

This sequence belongs to the flavin monoamine oxidase family. As to quaternary structure, component of the SWM histone demethylase complex composed of at least lsd1, lsd2, phf1 and phf2. Interacts directly with lsd2. The cofactor is FAD.

The protein localises to the nucleus. In terms of biological role, catalytic component of the SWM histone demethylase complex that specifically demethylates H3K9me2, a specific tag for epigenetic transcriptional activation, thereby acting as a corepressor. Acts by oxidizing the substrate by FAD to generate the corresponding imine that is subsequently hydrolyzed. Has a role in regulating heterochromatin propagation and euchromatic transcription. Also has a gene activating role. In Schizosaccharomyces pombe (strain 972 / ATCC 24843) (Fission yeast), this protein is Lysine-specific histone demethylase 1 (lsd1).